The chain runs to 192 residues: ADP-ribosylation factor-like protein 4C (192 aa).

A lipid anchor (N-myristoyl glycine) is attached at G2. Residues 20–27, 68–72, and 127–130 contribute to the GTP site; these read GLDSAGKT, DVGGQ, and NKQD.

Belongs to the small GTPase superfamily. Arf family. As to quaternary structure, interacts with CYTH2. Interacts with alpha tubulin; interaction is independent on the ARL4C GTP or GDP binding status. In terms of tissue distribution, expressed in several tumor cell lines (at protein level). Expressed in lung, brain, leukocytes and placenta.

The protein resides in the cell projection. It localises to the filopodium. It is found in the cell membrane. Its subcellular location is the cytoplasm. Functionally, small GTP-binding protein which cycles between an inactive GDP-bound and an active GTP-bound form, and the rate of cycling is regulated by guanine nucleotide exchange factors (GEF) and GTPase-activating proteins (GAP). GTP-binding protein that does not act as an allosteric activator of the cholera toxin catalytic subunit. May be involved in transport between a perinuclear compartment and the plasma membrane, apparently linked to the ABCA1-mediated cholesterol secretion pathway. Recruits CYTH1, CYTH2, CYTH3 and CYTH4 to the plasma membrane in the GDP-bound form. Regulates the microtubule-dependent intracellular vesicular transport from early endosome to recycling endosome process. The chain is ADP-ribosylation factor-like protein 4C (ARL4C) from Homo sapiens (Human).